Here is a 289-residue protein sequence, read N- to C-terminus: Metal-staphylopine import system permease protein CntC (289 aa).

The next 5 membrane-spanning stretches (helical) occupy residues 13–33 (AVIA…APLV), 77–97 (LLYV…LGFL), 115–135 (VMLA…FGMG), 194–214 (IAII…GFSF), and 249–269 (IAIV…QIAI). Residues 73-262 (IRPSLLYVFV…IIVMAFNFLS (190 aa)) form the ABC transmembrane type-1 domain.

This sequence belongs to the binding-protein-dependent transport system permease family. As to quaternary structure, the complex is composed of two ATP-binding proteins (CntD and CntF), two transmembrane proteins (CntB and CntC) and a solute-binding protein (CntA).

It is found in the cell membrane. Nickel/cobalt import is reduced in the presence of zinc. In terms of biological role, part of the ABC transporter complex CntABCDF (Opp1) involved in the uptake of metal in complex with the metallophore staphylopine (StP). Involved in the import of divalent metals ions such as nickel, cobalt and zinc. Probably responsible for the translocation of the substrate across the membrane. Plays a major role in nickel/cobalt import in zinc-depleted conditions. Contributes to virulence. Required for full urease activity in vitro. This Staphylococcus aureus (strain NCTC 8325 / PS 47) protein is Metal-staphylopine import system permease protein CntC.